We begin with the raw amino-acid sequence, 930 residues long: RNA-binding protein 10 (930 aa).

Basic and acidic residues-rich tracts occupy residues 1 to 14 (MEYE…DRTG) and 21 to 45 (RSQD…RSYP). The tract at residues 1–127 (MEYERRGGRG…EDEEEEEEKA (127 aa)) is disordered. Residues 59-70 (DSSEEQSAEDSY) are compositionally biased toward acidic residues. Phosphoserine is present on residues Ser-61 and Ser-89. The segment covering 80-89 (RRRRRRHRHS) has biased composition (basic residues). Basic and acidic residues predominate over residues 98 to 111 (RDGDYRDQDYRTEQ). The segment covering 112–125 (GEEEEEEDEEEEEE) has biased composition (acidic residues). The RRM 1 domain occupies 129–209 (NIVMLRMLPQ…QKVSMHYSDP (81 aa)). Residues 212-242 (KINEDWLCNKCGVQNFKRREKCFKCGVPKSE) form a RanBP2-type zinc finger. Residues 300 to 384 (DTIILRNLNP…KTINVEFAKG (85 aa)) enclose the RRM 2 domain. Position 383 is an N6-acetyllysine (Lys-383). Disordered stretches follow at residues 464–487 (GPGM…EAGA), 503–522 (APGL…TATN), 537–566 (ELQS…QYPV), 620–646 (EQSA…HKTK), and 712–753 (DLPK…EEKL). Over residues 507–522 (YQQSAEGSSGQSTATN) the composition is skewed to polar residues. A compositionally biased stretch (low complexity) spans 540 to 562 (SPTQPSSSAFPPATSPTAPEAYS). Residues 623–639 (ADGHKDTGASSKEGKEK) are compositionally biased toward basic and acidic residues. Residues Ser-718, Ser-723, Ser-733, Ser-736, and Ser-738 each carry the phosphoserine modification. A compositionally biased stretch (basic and acidic residues) spans 743 to 753 (ERGGPEREEKL). Residues 759–784 (LACLLCRRQFPSKEALIRHQQLSGLH) form a C2H2-type; atypical zinc finger. Ser-781, Ser-797, and Ser-845 each carry phosphoserine. The segment at 818–861 (AAERREKYGIPEPPEPKRRKYGGISTASVDFEQPTRDGLGSDNI) is disordered. One can recognise a G-patch domain in the interval 858–904 (SDNIGSRMLQAMGWKEGSGLGRKKQGIVTPIEAQTRVRGSGLGARGS). Residue Arg-902 is modified to Omega-N-methylarginine.

As to quaternary structure, associates with the spliceosome. Component of a large chromatin remodeling complex, at least composed of MYSM1, PCAF, RBM10 and KIF11/TRIP5.

It localises to the nucleus. Its function is as follows. Binds to ssRNA containing the consensus sequence 5'-AGGUAA-3'. May be involved in post-transcriptional processing, most probably in mRNA splicing. Binds to RNA homopolymers, with a preference for poly(G) and poly(U) and little for poly(A). May bind to specific miRNA hairpins. The polypeptide is RNA-binding protein 10 (Mus musculus (Mouse)).